A 340-amino-acid chain; its full sequence is Peroxisomal adenine nucleotide transporter 1 (340 aa).

Solcar repeat units lie at residues 4–119 (ENAV…VRKH), 133–218 (FSTP…LREA), and 236–320 (LSPG…LTKM). 6 helical membrane passes run 6–26 (AVIGATASSLANIAVYPLDLA), 96–116 (GSSTVAGFIQSFSYFFWYTLV), 139–159 (LVLGIVAAATSQLFVNPINVV), 190–210 (GFWAGLKVSLVLTVNPSITYA), 242–262 (FVMGVLSKIVSTVLTQPLIIA), and 293–313 (WKGLGPQITKGVLVQGLLFMF).

Belongs to the mitochondrial carrier (TC 2.A.29) family.

It localises to the peroxisome membrane. Functionally, adenine nucleotide transporter involved in the uniport of ATP and adenine nucleotide hetero-exchange transport between the cytosol and the peroxisomal lumen. This transport is accompanied by a proton transport from the peroxisomal lumen to the cytosol. Transport of ATP into the peroxisome is required for beta-oxidation of medium-chain fatty acids. This chain is Peroxisomal adenine nucleotide transporter 1 (ANT1), found in Eremothecium gossypii (strain ATCC 10895 / CBS 109.51 / FGSC 9923 / NRRL Y-1056) (Yeast).